The primary structure comprises 523 residues: Calcium uptake protein 3, mitochondrial (523 aa).

The transit peptide at 1-6 (MAALRR) directs the protein to the mitochondrion. Positions 18-48 (LAPQQPFLSPWGRPAGTAPGMSGRPFSGREE) are disordered. In terms of domain architecture, EF-hand 1 spans 225–260 (KPHAGFRIAFNMFDTDGNEMVDKKEFLVLQEIFRKK). Residues Asp238, Asp240, Asn242, Met244, Asp246, and Glu249 each contribute to the Ca(2+) site. Residues 414-429 (ITFDEFRSFFQFLNNL) form the EF-hand 2; degenerate domain. The EF-hand 3 domain occupies 463–498 (LSPHLVNTVFKIFDVDKDDQLSYKEFIGIMKDRLHR). Ca(2+)-binding residues include Asp476, Asp478, Asp480, Gln482, and Glu487.

It belongs to the MICU1 family. MICU3 subfamily. As to quaternary structure, heterodimer; disulfide-linked; heterodimerizes with MICU1. Component of the uniplex complex, composed of MCU, EMRE/SMDT1, MICU1 and MICU3 in a 4:4:1:1 stoichiometry.

The protein resides in the mitochondrion intermembrane space. It localises to the mitochondrion inner membrane. In terms of biological role, tissue-specific calcium sensor of the mitochondrial calcium uniporter (MCU) channel, which specifically regulates MCU channel activity in the central nervous system and skeletal muscle. Senses calcium level via its EF-hand domains: compared to MICU1 and MICU2, MICU3 has a higher affinity for calcium. MICU1 and MICU3 form a disulfide-linked heterodimer that stimulates and inhibits MCU activity, depending on the concentration of calcium. At low calcium levels, MICU1 occludes the pore of the MCU channel, preventing mitochondrial calcium uptake. At higher calcium levels, calcium-binding to MICU1 and MICU3 induces a conformational change that weakens MCU-MICU1 interactions and moves the MICU1-MICU3 heterodimer away from the pore, allowing calcium permeation through the MCU channel. The high calcium affinity of MICU3 lowers the calcium threshold necessary for calcium permeation through the MCU channel. The MICU1-MICU3 heterodimer promotes flexibility of neurotransmission in neuronal cells by enhancing mitochondrial calcium uptake in presynapses. It is also required to increase mitochondrial calcium uptake in skeletal muscle cells, thereby increasing ATP production. The polypeptide is Calcium uptake protein 3, mitochondrial (Rattus norvegicus (Rat)).